The primary structure comprises 86 residues: Large ribosomal subunit protein bL27 (86 aa).

This sequence belongs to the bacterial ribosomal protein bL27 family.

This is Large ribosomal subunit protein bL27 from Xanthomonas axonopodis pv. citri (strain 306).